The chain runs to 711 residues: Transferrin-binding protein B (711 aa).

The first 20 residues, 1-20, serve as a signal peptide directing secretion; sequence MNNPLVNQAAMVLPVFLLSA. C21 is lipidated: N-palmitoyl cysteine. Residue C21 is the site of S-diacylglycerol cysteine attachment. 7 disordered regions span residues 33–58, 79–105, 118–146, 225–251, 370–396, 437–492, and 682–711; these read VDTE…QKDQ, SEVK…KRQK, DIYS…KNQA, SKKQ…ESTL, LENG…SENS, PKDS…GDTN, and TEKA…QPVQ. Positions 46 to 56 are enriched in polar residues; that stretch reads DVSSEKPQAQK. The segment covering 96-105 has biased composition (basic and acidic residues); that stretch reads KPKELPKRQK. Residues 119–146 show a composition bias toward polar residues; sequence IYSSPYLTPSNHQNGSAGNGVNQPKNQA. Residues 373–393 are compositionally biased toward low complexity; it reads GAAASGSTGAAASGGAAGTSS. The span at 457 to 472 shows a compositional bias: basic and acidic residues; that stretch reads FTRKFEHTPESDKKDA. Composition is skewed to polar residues over residues 474–492 and 684–699; these read AGTQ…GDTN and KATA…SSAT.

The protein belongs to the TbpB family. Isotype II subfamily. In terms of assembly, binds only human holo-transferrin (TF), via the TF C-terminus. Forms a large complex with TbpA and TF. Interacts via its C-terminal domain with Slam1.

It localises to the cell outer membrane. The protein localises to the cell surface. Neisseria acquires iron by extracting it from serum transferrin (TF) in its human host. Acts as a TF receptor and is required for TF utilization. Involved in the initial capture of TF. Helps select only those TF molecules that can be used as an iron source and concentrates them on the cell surface, maintaining the iron-loaded status of the TF C-terminal lobe until its delivery to TbpA. This chain is Transferrin-binding protein B (tbpB), found in Neisseria meningitidis serogroup B.